The sequence spans 525 residues: Bifunctional purine biosynthesis protein PurH (525 aa).

One can recognise an MGS-like domain in the interval 1–148; sequence MPSNNLIKNA…KNYKNVIVIV (148 aa).

Belongs to the PurH family.

It carries out the reaction (6R)-10-formyltetrahydrofolate + 5-amino-1-(5-phospho-beta-D-ribosyl)imidazole-4-carboxamide = 5-formamido-1-(5-phospho-D-ribosyl)imidazole-4-carboxamide + (6S)-5,6,7,8-tetrahydrofolate. The catalysed reaction is IMP + H2O = 5-formamido-1-(5-phospho-D-ribosyl)imidazole-4-carboxamide. The protein operates within purine metabolism; IMP biosynthesis via de novo pathway; 5-formamido-1-(5-phospho-D-ribosyl)imidazole-4-carboxamide from 5-amino-1-(5-phospho-D-ribosyl)imidazole-4-carboxamide (10-formyl THF route): step 1/1. It participates in purine metabolism; IMP biosynthesis via de novo pathway; IMP from 5-formamido-1-(5-phospho-D-ribosyl)imidazole-4-carboxamide: step 1/1. The polypeptide is Bifunctional purine biosynthesis protein PurH (Buchnera aphidicola subsp. Acyrthosiphon pisum (strain APS) (Acyrthosiphon pisum symbiotic bacterium)).